The primary structure comprises 516 residues: Gamma-aminobutyrate transaminase 1, mitochondrial (516 aa).

The N-terminal 47 residues, M1–F47, are a transit peptide targeting the mitochondrion. Polar residues predominate over residues R45 to E60. Residues R45 to K64 are disordered. G171–S172 is a pyridoxal 5'-phosphate binding site. Y204 contacts substrate. Pyridoxal 5'-phosphate is bound at residue D311. Position 340 (K340) interacts with substrate. An N6-(pyridoxal phosphate)lysine modification is found at K340.

It belongs to the class-III pyridoxal-phosphate-dependent aminotransferase family.

Its subcellular location is the mitochondrion. It carries out the reaction 4-aminobutanoate + pyruvate = succinate semialdehyde + L-alanine. It catalyses the reaction 4-aminobutanoate + glyoxylate = succinate semialdehyde + glycine. Functionally, transaminase that degrades gamma-amino butyric acid (GABA) and uses pyruvate as amino-group acceptor, but not 2-oxoglutarate. This chain is Gamma-aminobutyrate transaminase 1, mitochondrial, found in Oryza sativa subsp. indica (Rice).